The following is a 101-amino-acid chain: Small ribosomal subunit protein uS14A (101 aa).

The tract at residues 31 to 69 is disordered; sequence IAAPGSSPEERAAAQQELRRQPRDASATRLRNRDAVDGR. Residues 38–53 show a composition bias toward basic and acidic residues; the sequence is PEERAAAQQELRRQPR.

Belongs to the universal ribosomal protein uS14 family. In terms of assembly, part of the 30S ribosomal subunit. Contacts proteins S3 and S10.

Its function is as follows. Binds 16S rRNA, required for the assembly of 30S particles and may also be responsible for determining the conformation of the 16S rRNA at the A site. This chain is Small ribosomal subunit protein uS14A, found in Saccharopolyspora erythraea (strain ATCC 11635 / DSM 40517 / JCM 4748 / NBRC 13426 / NCIMB 8594 / NRRL 2338).